Consider the following 228-residue polypeptide: Cytidylate kinase (228 aa).

Residue 17 to 25 (GPTASGKGT) participates in ATP binding.

It belongs to the cytidylate kinase family. Type 1 subfamily.

Its subcellular location is the cytoplasm. The enzyme catalyses CMP + ATP = CDP + ADP. It catalyses the reaction dCMP + ATP = dCDP + ADP. This chain is Cytidylate kinase, found in Burkholderia ambifaria (strain ATCC BAA-244 / DSM 16087 / CCUG 44356 / LMG 19182 / AMMD) (Burkholderia cepacia (strain AMMD)).